Reading from the N-terminus, the 953-residue chain is Atromentin synthetase invA2 (953 aa).

The tract at residues 38–460 is adenylation (A) domain; that stretch reads RAVSQYPNHE…SGRIKDTVIV (423 aa). Residues 592–670 enclose the Carrier domain; sequence APSTETEKTL…SLAKYVDSLI (79 aa). The thiolation and peptide carrier (T) domain stretch occupies residues 597 to 667; it reads TEKTLAGIYA…VISSLAKYVD (71 aa). At serine 629 the chain carries O-(pantetheine 4'-phosphoryl)serine. The thioesterase (TE) domain stretch occupies residues 693-795; sequence PIFMVHPGVG…FTGLINIPPH (103 aa).

Belongs to the ATP-dependent AMP-binding enzyme family.

It functions in the pathway secondary metabolite biosynthesis. Its function is as follows. An L-tyrosine:2-oxoglutarate aminotransferase (probably invD) and atromentin synthetase invA2 catalyze consecutive steps to turn over L-tyrosine into atromentin, which represents the generic precursor molecule for the entire terphenylquinone and pulvinic acid family of pigments, which are widely distributed secondary metabolites in homobasidiomycetes. The first step catalyzed by the aminotransferase converts L-tyrosine in to 4-hydroxyphenylpyruvate (4-HPP). Adenylation of two 4-HPP monomers by the invA2 adenylation (A) domain, covalent tethering of the monomers as a thioester and oxoester onto the invA2 thiolation (T) and thioesterase (TE) domains, respectively, and symmetric C-C-bond formation between two monomers catalyzed by the invA2 TE domain leads to atromentin. This is Atromentin synthetase invA2 (invA2) from Paxillus involutus (Naked brimcap).